The sequence spans 310 residues: HTH-type transcriptional activator TtdR (310 aa).

The region spanning 6–63 (PLAKDLQVLVEIVHSGSFSAAAATLGQTPAFVTKRIQILENTLATTLLNRSARGVALT) is the HTH lysR-type domain. The segment at residues 23–42 (FSAAAATLGQTPAFVTKRIQ) is a DNA-binding region (H-T-H motif).

The protein belongs to the LysR transcriptional regulatory family.

Positive regulator required for L-tartrate-dependent anaerobic growth on glycerol. Induces expression of the ttdA-ttdB-ygjE operon. This Escherichia coli (strain K12) protein is HTH-type transcriptional activator TtdR (ttdR).